A 775-amino-acid polypeptide reads, in one-letter code: Glycerol-3-phosphate acyltransferase (775 aa).

An HXXXXD motif motif is present at residues 268-273; that stretch reads HRSYID.

It belongs to the GPAT/DAPAT family.

The protein localises to the cell membrane. The catalysed reaction is sn-glycerol 3-phosphate + an acyl-CoA = a 1-acyl-sn-glycero-3-phosphate + CoA. It participates in phospholipid metabolism; CDP-diacylglycerol biosynthesis; CDP-diacylglycerol from sn-glycerol 3-phosphate: step 1/3. The chain is Glycerol-3-phosphate acyltransferase (plsB) from Mycobacterium leprae (strain TN).